The primary structure comprises 218 residues: Sulfite reductase, assimilatory-type (218 aa).

4 residues coordinate [4Fe-4S] cluster: Cys-91, Cys-97, Cys-131, and Cys-135. A siroheme-binding site is contributed by Cys-135.

This enzyme catalyzes the 6-electron reduction of sulfite to sulfide. This is one of several activities required for the biosynthesis of L-cysteine from sulfate. This Nitratidesulfovibrio vulgaris (strain ATCC 29579 / DSM 644 / CCUG 34227 / NCIMB 8303 / VKM B-1760 / Hildenborough) (Desulfovibrio vulgaris) protein is Sulfite reductase, assimilatory-type.